The primary structure comprises 204 residues: Large ribosomal subunit protein bL17 (204 aa).

The interval 124-204 (QAVGEAERAR…DDDGPAESKS (81 aa)) is disordered. The span at 128–142 (EAERARGTRFSERRK) shows a compositional bias: basic and acidic residues. The segment covering 156 to 191 (SESPTAAAVAAQSAEEQAPVEETLTAQAAETSAATV) has biased composition (low complexity). A compositionally biased stretch (acidic residues) spans 192 to 204 (EETDDDGPAESKS).

This sequence belongs to the bacterial ribosomal protein bL17 family. As to quaternary structure, part of the 50S ribosomal subunit. Contacts protein L32.

The sequence is that of Large ribosomal subunit protein bL17 from Frankia alni (strain DSM 45986 / CECT 9034 / ACN14a).